Consider the following 265-residue polypeptide: Small ribosomal subunit protein uS3 (265 aa).

The 69-residue stretch at Ile-43–Lys-111 folds into the KH type-2 domain. Residues Ala-217 to Ala-265 are disordered. Residues Ser-226 to Thr-244 show a composition bias toward basic and acidic residues. Over residues Ala-250–Ala-265 the composition is skewed to low complexity.

Belongs to the universal ribosomal protein uS3 family. Part of the 30S ribosomal subunit. Forms a tight complex with proteins S10 and S14.

Binds the lower part of the 30S subunit head. Binds mRNA in the 70S ribosome, positioning it for translation. In Clavibacter michiganensis subsp. michiganensis (strain NCPPB 382), this protein is Small ribosomal subunit protein uS3.